The primary structure comprises 417 residues: Glutamate-1-semialdehyde 2,1-aminomutase (417 aa).

An N6-(pyridoxal phosphate)lysine modification is found at Lys267.

The protein belongs to the class-III pyridoxal-phosphate-dependent aminotransferase family. HemL subfamily. In terms of assembly, homodimer. It depends on pyridoxal 5'-phosphate as a cofactor.

The protein resides in the cytoplasm. The enzyme catalyses (S)-4-amino-5-oxopentanoate = 5-aminolevulinate. The protein operates within porphyrin-containing compound metabolism; protoporphyrin-IX biosynthesis; 5-aminolevulinate from L-glutamyl-tRNA(Glu): step 2/2. This Solibacter usitatus (strain Ellin6076) protein is Glutamate-1-semialdehyde 2,1-aminomutase.